Reading from the N-terminus, the 360-residue chain is 8-hydroxygeraniol dehydrogenase (360 aa).

Residues C50, H72, C103, C106, C109, C117, and C166 each coordinate Zn(2+).

This sequence belongs to the zinc-containing alcohol dehydrogenase family. Requires Zn(2+) as cofactor. As to expression, present in seedlings and vascular tissues (at protein level). Restricted to the epidermis.

It carries out the reaction (6E)-8-hydroxygeraniol + 2 NADP(+) = (6E)-8-oxogeranial + 2 NADPH + 2 H(+). Functionally, dehydrogenase involved in the biosynthesis of oxogeranial from hydroxygeraniol, a precursor of the terpenoid indole alkaloids such as vinblastine and vincristine. The sequence is that of 8-hydroxygeraniol dehydrogenase (10HGO) from Catharanthus roseus (Madagascar periwinkle).